Reading from the N-terminus, the 668-residue chain is DNA ligase (668 aa).

Residues 34-38, 83-84, and glutamate 113 each bind NAD(+); these read DAEYD and SL. Lysine 115 acts as the N6-AMP-lysine intermediate in catalysis. NAD(+) contacts are provided by arginine 136, glutamate 170, lysine 286, and lysine 310. Residues cysteine 404, cysteine 407, cysteine 422, and cysteine 427 each coordinate Zn(2+). The BRCT domain occupies 590–668; it reads DSDSYFAGKT…EEQLMGELKK (79 aa).

Belongs to the NAD-dependent DNA ligase family. LigA subfamily. Mg(2+) is required as a cofactor. Requires Mn(2+) as cofactor.

The enzyme catalyses NAD(+) + (deoxyribonucleotide)n-3'-hydroxyl + 5'-phospho-(deoxyribonucleotide)m = (deoxyribonucleotide)n+m + AMP + beta-nicotinamide D-nucleotide.. In terms of biological role, DNA ligase that catalyzes the formation of phosphodiester linkages between 5'-phosphoryl and 3'-hydroxyl groups in double-stranded DNA using NAD as a coenzyme and as the energy source for the reaction. It is essential for DNA replication and repair of damaged DNA. The sequence is that of DNA ligase from Bacillus subtilis (strain 168).